Here is a 520-residue protein sequence, read N- to C-terminus: DNA mismatch repair protein MutL (520 aa).

It belongs to the DNA mismatch repair MutL/HexB family.

In terms of biological role, this protein is involved in the repair of mismatches in DNA. It is required for dam-dependent methyl-directed DNA mismatch repair. May act as a 'molecular matchmaker', a protein that promotes the formation of a stable complex between two or more DNA-binding proteins in an ATP-dependent manner without itself being part of a final effector complex. This chain is DNA mismatch repair protein MutL, found in Persephonella marina (strain DSM 14350 / EX-H1).